The chain runs to 190 residues: Putative manganese efflux pump MntP (190 aa).

6 helical membrane-spanning segments follow: residues 3–23, 37–57, 72–88, 111–131, 138–158, and 164–184; these read FLQI…CSVV, LVLA…GWVI, HWIA…KMIW, IILG…LAFV, VALS…WIGH, and FGKW…ANIV.

The protein belongs to the MntP (TC 9.B.29) family.

The protein resides in the cell membrane. Its function is as follows. Probably functions as a manganese efflux pump. This is Putative manganese efflux pump MntP from Corynebacterium glutamicum (strain R).